The chain runs to 746 residues: Polyphosphate kinase (746 aa).

A compositionally biased stretch (polar residues) spans 1 to 17 (MRQPNTQAEAQHTQPSV). The tract at residues 1–60 (MRQPNTQAEAQHTQPSVGSIAAHRPNTVAATVSGLEPDIDADLDAYEESEESQDGGARLP) is disordered. Residues 37 to 53 (PDIDADLDAYEESEESQ) are compositionally biased toward acidic residues. ATP is bound at residue Asn102. Residues Arg429 and Arg459 each coordinate Mg(2+). The active-site Phosphohistidine intermediate is His489. ATP-binding residues include Tyr522, Arg618, and His646.

It belongs to the polyphosphate kinase 1 (PPK1) family. The cofactor is Mg(2+). In terms of processing, an intermediate of this reaction is the autophosphorylated ppk in which a phosphate is covalently linked to a histidine residue through a N-P bond.

The enzyme catalyses [phosphate](n) + ATP = [phosphate](n+1) + ADP. Its function is as follows. Catalyzes the reversible transfer of the terminal phosphate of ATP to form a long-chain polyphosphate (polyP). The protein is Polyphosphate kinase of Streptomyces coelicolor (strain ATCC BAA-471 / A3(2) / M145).